The sequence spans 192 residues: Putative BTB/POZ domain-containing protein At4g04090 (192 aa).

Positions 23 to 96 (VDVRLMARDS…TYSDGSMLSE (74 aa)) constitute a BTB domain.

It functions in the pathway protein modification; protein ubiquitination. May act as a substrate-specific adapter of an E3 ubiquitin-protein ligase complex (CUL3-RBX1-BTB) which mediates the ubiquitination and subsequent proteasomal degradation of target proteins. This chain is Putative BTB/POZ domain-containing protein At4g04090, found in Arabidopsis thaliana (Mouse-ear cress).